Reading from the N-terminus, the 1488-residue chain is Chromosome partition protein MukB (1488 aa).

34-41 (GGNGAGKS) serves as a coordination point for ATP. 3 coiled-coil regions span residues 326 to 418 (LEAD…QYNQ), 444 to 472 (LDTFQAKEQEATEKLLSLEQKMSVAQTAH), and 509 to 602 (RHLA…RRAP). The tract at residues 666 to 783 (PGGAEDQRLN…SLPIFGRAAR (118 aa)) is flexible hinge. Coiled-coil stretches lie at residues 835 to 923 (EAEI…AKLE), 977 to 1116 (EMLS…AKAG), and 1209 to 1265 (VEAI…LQSV). Residues 1049–1074 (ADSGAEERARQRRDELHAQLSNNRSR) form a disordered region. Residues 1051-1065 (SGAEERARQRRDELH) are compositionally biased toward basic and acidic residues.

Belongs to the SMC family. MukB subfamily. As to quaternary structure, homodimerization via its hinge domain. Binds to DNA via its C-terminal region. Interacts, and probably forms a ternary complex, with MukE and MukF via its C-terminal region. The complex formation is stimulated by calcium or magnesium. Interacts with tubulin-related protein FtsZ.

It localises to the cytoplasm. The protein localises to the nucleoid. In terms of biological role, plays a central role in chromosome condensation, segregation and cell cycle progression. Functions as a homodimer, which is essential for chromosome partition. Involved in negative DNA supercoiling in vivo, and by this means organize and compact chromosomes. May achieve or facilitate chromosome segregation by condensation DNA from both sides of a centrally located replisome during cell division. The chain is Chromosome partition protein MukB from Salmonella heidelberg (strain SL476).